We begin with the raw amino-acid sequence, 93 residues long: Large ribosomal subunit protein bL27 (93 aa).

Residues 1–22 (MAHKKAGGSSRNGRDSEGRRLG) form a disordered region.

It belongs to the bacterial ribosomal protein bL27 family.

The polypeptide is Large ribosomal subunit protein bL27 (Methylobacterium sp. (strain 4-46)).